The chain runs to 314 residues: Aspartate carbamoyltransferase catalytic subunit (314 aa).

Positions 55 and 56 each coordinate carbamoyl phosphate. Position 83 (Lys83) interacts with L-aspartate. Carbamoyl phosphate-binding residues include Arg105, His139, and Gln142. Residues Arg172 and Arg226 each contribute to the L-aspartate site. Residues Gly267 and Pro268 each contribute to the carbamoyl phosphate site.

Belongs to the aspartate/ornithine carbamoyltransferase superfamily. ATCase family. Heterododecamer (2C3:3R2) of six catalytic PyrB chains organized as two trimers (C3), and six regulatory PyrI chains organized as three dimers (R2).

It catalyses the reaction carbamoyl phosphate + L-aspartate = N-carbamoyl-L-aspartate + phosphate + H(+). It functions in the pathway pyrimidine metabolism; UMP biosynthesis via de novo pathway; (S)-dihydroorotate from bicarbonate: step 2/3. Its function is as follows. Catalyzes the condensation of carbamoyl phosphate and aspartate to form carbamoyl aspartate and inorganic phosphate, the committed step in the de novo pyrimidine nucleotide biosynthesis pathway. The protein is Aspartate carbamoyltransferase catalytic subunit of Rhodococcus opacus (strain B4).